A 332-amino-acid polypeptide reads, in one-letter code: Fructose-1,6-bisphosphatase class 1 (332 aa).

Mg(2+) is bound by residues Glu92, Asp113, Leu115, and Asp116. Substrate contacts are provided by residues 116–119, Asn209, Tyr242, and Lys272; that span reads DGSS. A Mg(2+)-binding site is contributed by Glu278.

Belongs to the FBPase class 1 family. As to quaternary structure, homotetramer. The cofactor is Mg(2+).

It is found in the cytoplasm. The enzyme catalyses beta-D-fructose 1,6-bisphosphate + H2O = beta-D-fructose 6-phosphate + phosphate. It participates in carbohydrate biosynthesis; Calvin cycle. The protein is Fructose-1,6-bisphosphatase class 1 of Prosthecochloris aestuarii (strain DSM 271 / SK 413).